The following is a 318-amino-acid chain: uncharacterized protein (318 aa).

This is an uncharacterized protein from Ostreid herpesvirus 1 (isolate France) (OsHV-1).